A 428-amino-acid chain; its full sequence is Enolase (428 aa).

(2R)-2-phosphoglycerate is bound at residue Q163. E205 acts as the Proton donor in catalysis. Mg(2+) contacts are provided by D242, E285, and D312. (2R)-2-phosphoglycerate is bound by residues K337, R366, S367, and K388. K337 serves as the catalytic Proton acceptor.

Belongs to the enolase family. Requires Mg(2+) as cofactor.

It localises to the cytoplasm. Its subcellular location is the secreted. The protein resides in the cell surface. The enzyme catalyses (2R)-2-phosphoglycerate = phosphoenolpyruvate + H2O. It participates in carbohydrate degradation; glycolysis; pyruvate from D-glyceraldehyde 3-phosphate: step 4/5. Functionally, catalyzes the reversible conversion of 2-phosphoglycerate (2-PG) into phosphoenolpyruvate (PEP). It is essential for the degradation of carbohydrates via glycolysis. The sequence is that of Enolase from Polynucleobacter asymbioticus (strain DSM 18221 / CIP 109841 / QLW-P1DMWA-1) (Polynucleobacter necessarius subsp. asymbioticus).